Reading from the N-terminus, the 305-residue chain is Aspartate carbamoyltransferase catalytic subunit (305 aa).

Carbamoyl phosphate contacts are provided by Arg56 and Thr57. Lys85 is an L-aspartate binding site. Residues Arg106, His134, and Gln137 each contribute to the carbamoyl phosphate site. Residues Arg167 and Arg227 each contribute to the L-aspartate site. The carbamoyl phosphate site is built by Leu266 and Pro267.

It belongs to the aspartate/ornithine carbamoyltransferase superfamily. ATCase family. Heterooligomer of catalytic and regulatory chains.

The enzyme catalyses carbamoyl phosphate + L-aspartate = N-carbamoyl-L-aspartate + phosphate + H(+). Its pathway is pyrimidine metabolism; UMP biosynthesis via de novo pathway; (S)-dihydroorotate from bicarbonate: step 2/3. Its function is as follows. Catalyzes the condensation of carbamoyl phosphate and aspartate to form carbamoyl aspartate and inorganic phosphate, the committed step in the de novo pyrimidine nucleotide biosynthesis pathway. This chain is Aspartate carbamoyltransferase catalytic subunit, found in Thermoplasma volcanium (strain ATCC 51530 / DSM 4299 / JCM 9571 / NBRC 15438 / GSS1).